The primary structure comprises 1940 residues: Myosin-2 (1940 aa).

Positions 33-82 (DAKTSVFVAEPKESFVKGTVQSREGGKVTVKTEAGATLTVKEDQVFPMNP) constitute a Myosin N-terminal SH3-like domain. Thr-64 and Thr-69 each carry phosphothreonine. A Myosin motor domain is found at 86–783 (DKIEDMAMMT…LLGLLEEMRD (698 aa)). Lys-130 carries the N6,N6,N6-trimethyllysine modification. Residue 179-186 (GESGAGKT) coordinates ATP. Tyr-389 is modified (phosphotyrosine). At Ser-392 the chain carries Phosphoserine. Thr-419 is subject to Phosphothreonine. Ser-625 bears the Phosphoserine mark. Residues 660 to 682 (LNKLMTNLRSTHPHFVRCIIPNE) form an actin-binding region. A Pros-methylhistidine modification is found at His-758. The tract at residues 762–776 (KFGHTKVFFKAGLLG) is actin-binding. The region spanning 786–815 (LAQLITRTQARCRGFLARVEYQKMVERRES) is the IQ domain. Residues 844 to 1940 (LLKSAETEKE…EVHTKVISEE (1097 aa)) adopt a coiled-coil conformation. Ser-1093, Ser-1097, Ser-1163, and Ser-1238 each carry phosphoserine. Residues 1154–1173 (RLEEAGGATSAQIEMNKKRE) form a disordered region. Thr-1242 is subject to Phosphothreonine. Phosphoserine is present on Ser-1244. Thr-1256 carries the post-translational modification Phosphothreonine. Ser-1262 carries the phosphoserine modification. The residue at position 1287 (Thr-1287) is a Phosphothreonine. Ser-1289, Ser-1293, Ser-1304, and Ser-1307 each carry phosphoserine. Tyr-1465 carries the post-translational modification Phosphotyrosine. The residue at position 1468 (Thr-1468) is a Phosphothreonine. At Ser-1475 the chain carries Phosphoserine. Position 1493 is a phosphotyrosine (Tyr-1493). The residue at position 1496 (Ser-1496) is a Phosphoserine. Position 1502 is a phosphothreonine (Thr-1502). Ser-1515 is modified (phosphoserine). The residue at position 1518 (Thr-1518) is a Phosphothreonine. 6 positions are modified to phosphoserine: Ser-1543, Ser-1555, Ser-1575, Ser-1601, Ser-1715, and Ser-1727. Thr-1731 and Thr-1737 each carry phosphothreonine. At Ser-1740 the chain carries Phosphoserine. A disordered region spans residues 1884-1920 (KRQAEEAEEQSNTNLSKFRKLQHELEEAEERADIAES).

The protein belongs to the TRAFAC class myosin-kinesin ATPase superfamily. Myosin family. In terms of assembly, muscle myosin is a hexameric protein that consists of 2 heavy chain subunits (MHC), 2 alkali light chain subunits (MLC) and 2 regulatory light chain subunits (MLC-2). Interacts with GCSAM.

It is found in the cytoplasm. Its subcellular location is the myofibril. Functionally, myosins are actin-based motor molecules with ATPase activity essential for muscle contraction. The polypeptide is Myosin-2 (MYH2) (Canis lupus familiaris (Dog)).